The sequence spans 88 residues: Large ribosomal subunit protein bL27 (88 aa).

It belongs to the bacterial ribosomal protein bL27 family.

This chain is Large ribosomal subunit protein bL27, found in Mycolicibacterium smegmatis (strain ATCC 700084 / mc(2)155) (Mycobacterium smegmatis).